The following is a 468-amino-acid chain: Zinc-regulated transporter 1 (468 aa).

The signal sequence occupies residues 1 to 17 (MKFTHLFFIGLLTKVYT). At 18 to 185 (ETVTVLSTRS…VKRDYDIPLR (168 aa)) the chain is on the extracellular side. N-linked (GlcNAc...) asparagine glycans are attached at residues Asn57 and Asn67. The chain crosses the membrane as a helical span at residues 186 to 206 (IGLLFVILVTSGIGSFGPIVL). The Cytoplasmic segment spans residues 207–217 (KQFVNLSQENY). A helical membrane pass occupies residues 218 to 238 (IIVIIKQFGTGIIISTAFVHL). Residues 239–257 (MTHAQLMWSNSCLKIKYEG) lie on the Extracellular side of the membrane. The chain crosses the membrane as a helical span at residues 258–278 (TGASITMAGIFIAFIIEYIAL). Topologically, residues 279–314 (RIVNARDTGKVDKKEIEETSSNEQSLHGISVNDKIS) are cytoplasmic. Residues 315-335 (VMILEAGIIFHSILIGITLVV) form a helical membrane-spanning segment. Topologically, residues 336–338 (TDD) are extracellular. Residues 339–359 (VYFITLFIVIVFHQFFEGLAL) form a helical membrane-spanning segment. Topologically, residues 360 to 374 (SSRIISITNASLSTK) are cytoplasmic. The helical transmembrane segment at 375-395 (LVMALMFALITPIGMAIGIGV) threads the bilayer. The Extracellular portion of the chain corresponds to 396–406 (LNKFNGNDPST). A helical membrane pass occupies residues 407–427 (LIALGTLDSFSAGVLLWTGLI). The Cytoplasmic segment spans residues 428–447 (EMWSHDWLHGHLRNSSFVKT). Residues 448–468 (TVALVSLILGMLLMSLLGNWA) traverse the membrane as a helical segment.

This sequence belongs to the ZIP transporter (TC 2.A.5) family.

Its subcellular location is the cell membrane. It catalyses the reaction Zn(2+)(in) = Zn(2+)(out). Zinc transporter that acts with PRA1 in sequestration of zinc from host tissues during infection. The pH-regulated antigen 1 (PRA1) binds zinc from its environment and then reassociates with ZRT1 to acquire this essential metal. The chain is Zinc-regulated transporter 1 (ZRT101) from Candida albicans (strain SC5314 / ATCC MYA-2876) (Yeast).